The following is a 201-amino-acid chain: Large ribosomal subunit protein uL4 (201 aa).

The segment at 45–71 (AQKTRAEVTGSGKKPWRQKGTGRARAG) is disordered.

This sequence belongs to the universal ribosomal protein uL4 family. As to quaternary structure, part of the 50S ribosomal subunit.

In terms of biological role, one of the primary rRNA binding proteins, this protein initially binds near the 5'-end of the 23S rRNA. It is important during the early stages of 50S assembly. It makes multiple contacts with different domains of the 23S rRNA in the assembled 50S subunit and ribosome. Functionally, forms part of the polypeptide exit tunnel. This is Large ribosomal subunit protein uL4 from Shewanella sp. (strain MR-4).